An 84-amino-acid polypeptide reads, in one-letter code: UPF0153 protein PA1578.1 (84 aa).

The protein belongs to the UPF0153 family.

The chain is UPF0153 protein PA1578.1 from Pseudomonas aeruginosa (strain ATCC 15692 / DSM 22644 / CIP 104116 / JCM 14847 / LMG 12228 / 1C / PRS 101 / PAO1).